Here is a 147-residue protein sequence, read N- to C-terminus: Hemoglobin subunit gamma-1 (147 aa).

Glycine 2 is subject to N-acetylglycine. The Globin domain maps to 3 to 147 (HFTEEDKATI…VASALSSRYH (145 aa)). Threonine 13 bears the Phosphothreonine mark. Residues serine 45, serine 51, and serine 53 each carry the phosphoserine modification. An N6-acetyllysine modification is found at lysine 60. Residue histidine 64 coordinates heme b. Position 83 is an N6-acetyllysine (lysine 83). Histidine 93 serves as a coordination point for heme b. S-nitrosocysteine is present on cysteine 94. Serine 140 carries the post-translational modification Phosphoserine.

It belongs to the globin family. In terms of assembly, heterotetramer of two alpha chains and two gamma chains in fetal hemoglobin (Hb F). The ratio of gamma-G to gamma-A chains in is approximately 2:1 in infant chimpanzee, and 1:2 in the adult. In terms of tissue distribution, red blood cells.

Functionally, gamma chains make up the fetal hemoglobin F, in combination with alpha chains. The sequence is that of Hemoglobin subunit gamma-1 (HBG1) from Pan troglodytes (Chimpanzee).